The following is a 334-amino-acid chain: Cathepsin J (334 aa).

The signal sequence occupies residues 1-17 (MTPAVFLVILCFGVASG). The propeptide at 18–113 (APARDPNLDA…PSAQKQVSIG (96 aa)) is activation peptide. Cys-138 is an active-site residue. N-linked (GlcNAc...) asparagine glycosylation is found at Asn-217, Asn-221, and Asn-268. An intrachain disulfide couples Cys-269 to Cys-322. Residue His-276 is part of the active site. Residue Asn-288 is glycosylated (N-linked (GlcNAc...) asparagine). Asn-300 is a catalytic residue.

It belongs to the peptidase C1 family. In terms of tissue distribution, expressed specifically in placenta.

It localises to the lysosome. The polypeptide is Cathepsin J (Ctsj) (Rattus norvegicus (Rat)).